The primary structure comprises 260 residues: ELL-associated factor 2 (260 aa).

Residues L17–S104 form a necessary for interaction with ELL region. Residues G116 to Q126 show a composition bias toward basic and acidic residues. 2 disordered regions span residues G116 to S154 and M170 to F234. Residues S146, S151, and S154 each carry the phosphoserine modification. Positions S174–D192 are enriched in low complexity. A necessary for transactivation activity region spans residues D177–D260. Over residues P225–F234 the composition is skewed to basic and acidic residues. The tract at residues R246–D260 is necessary for interaction with TCEA1 and transactivation activity.

This sequence belongs to the EAF family. In terms of assembly, isoform 1 and isoform 2 interact with TCEA1. Component of the super elongation complex (SEC), at least composed of EAF1, EAF2, CDK9, MLLT3/AF9, AFF (AFF1 or AFF4), the P-TEFb complex and ELL (ELL, ELL2 or ELL3). Interacts with ELL and ELL2. Expressed in heart, brain, placenta, lung, skeletal muscle, kidney, pancreas, spleen, prostate, testis, small intestine, colon, adrenal, bone marrow, lymph node, spinal gland, stomach, thyroid, trachea, thymus, liver and leukocytes.

It localises to the nucleus speckle. Acts as a transcriptional transactivator of TCEA1 elongation activity. Acts as a transcriptional transactivator of ELL and ELL2 elongation activities. Potent inducer of apoptosis in prostatic and non-prostatic cell lines. Inhibits prostate tumor growth in vivo. The polypeptide is ELL-associated factor 2 (EAF2) (Homo sapiens (Human)).